Consider the following 693-residue polypeptide: Elongation factor G (693 aa).

Positions 8 to 282 (KNTRNIGIMA…AVIDYLPSPL (275 aa)) constitute a tr-type G domain. GTP contacts are provided by residues 17–24 (AHIDAGKT), 81–85 (DTPGH), and 135–138 (NKMD).

It belongs to the TRAFAC class translation factor GTPase superfamily. Classic translation factor GTPase family. EF-G/EF-2 subfamily.

It localises to the cytoplasm. Catalyzes the GTP-dependent ribosomal translocation step during translation elongation. During this step, the ribosome changes from the pre-translocational (PRE) to the post-translocational (POST) state as the newly formed A-site-bound peptidyl-tRNA and P-site-bound deacylated tRNA move to the P and E sites, respectively. Catalyzes the coordinated movement of the two tRNA molecules, the mRNA and conformational changes in the ribosome. The polypeptide is Elongation factor G (Staphylococcus intermedius).